The following is a 79-amino-acid chain: Small ribosomal subunit protein bS18 (79 aa).

It belongs to the bacterial ribosomal protein bS18 family. Part of the 30S ribosomal subunit. Forms a tight heterodimer with protein bS6.

Functionally, binds as a heterodimer with protein bS6 to the central domain of the 16S rRNA, where it helps stabilize the platform of the 30S subunit. This chain is Small ribosomal subunit protein bS18, found in Bacillus velezensis (strain DSM 23117 / BGSC 10A6 / LMG 26770 / FZB42) (Bacillus amyloliquefaciens subsp. plantarum).